We begin with the raw amino-acid sequence, 506 residues long: Allantoinase (506 aa).

Zn(2+) is bound by residues histidine 105, histidine 107, lysine 195, histidine 231, histidine 292, and aspartate 366. Lysine 195 is modified (N6-carboxylysine).

Belongs to the metallo-dependent hydrolases superfamily. Allantoinase family. As to quaternary structure, homotetramer. It depends on Zn(2+) as a cofactor. Post-translationally, carboxylation allows a single lysine to coordinate two zinc ions.

The catalysed reaction is (S)-allantoin + H2O = allantoate + H(+). The protein operates within nitrogen metabolism; (S)-allantoin degradation; allantoate from (S)-allantoin: step 1/1. Its function is as follows. Catalyzes the conversion of allantoin (5-ureidohydantoin) to allantoate by hydrolytic cleavage of the five-member hydantoin ring. Catalyzes the first step of the ureide allantoin degradation followed by the sequential activity of AAH, UGLYAH and UAH which allows a complete purine breakdown without the intermediate generation of urea. The polypeptide is Allantoinase (ALN) (Arabidopsis thaliana (Mouse-ear cress)).